We begin with the raw amino-acid sequence, 246 residues long: MNIDTVRANAFAMPLTSPAFPMGPYRFVKREFFVITYRTDPEALRSVVPEPLAVTQPLVHYEFIRMPDSTGFGDYTESGQVIPVEYEGVAGSYTHAMYLNDHPPIAGGRELWGFPKKLALPTLKVHTDTLVGTLDYGPIRVATGTMGYKHEEVDIVEQARHLSAPNFLLKIIPHVDCSPRICELVRYYLEDIRVYGAWSGPAALELAPHALAPVADLPVLEVVGARHFIADLTLGLGEVVYDYLAK.

The Schiff-base intermediate with acetoacetate role is filled by Lys-116.

This sequence belongs to the ADC family.

It carries out the reaction acetoacetate + H(+) = acetone + CO2. Functionally, catalyzes the conversion of acetoacetate to acetone and carbon dioxide. The polypeptide is Acetoacetate decarboxylase (Bordetella avium (strain 197N)).